A 1854-amino-acid polypeptide reads, in one-letter code: MKKFLGEKQTRFAFRKLAVGLVSAAISSLFFVSIVGVDSVQAQEKLNVHYKYVTDTEITPQEKELIVSGVPRMPEGNEETYYLVYRLNSNAGAKTLPNTGDNNSNTMMAAGLLLTTIGLVVFAVSKRKVQSKFLLTVLVGASVGGGLILSVDALENGSLLQYNAEYQVSAGESLPSPGEISGYTYVGYIKDESIKKLLDNKIPDNQQNANVDKEALNQNKKLDYSVSFDKNGLKNQTVGVNTIEPQDEVLSGRVAKPELLYKETSIETEIAYGEQIQENPDLAEGTVRVKQEGKPGRKIEVVRIFTVDNAEVSREVLSTKIEEATPKIVEKGTKKLEAPSEKPVTSNLVQPEQVAPLPEYTGVQSGAIVEPEQVASLPEYSGTLSGAIVEPEQIEPEIGGVQSGAIVEPEQVTPLPEYTGTQAGAVVSPEQVAPLPEYTGTQSGAIVEPAQVTPLPEYTGVQSGAIVKPAQVTPLPEYTGTQSGAIVEPEQVTPSPEYTGVQAGAIVEPEQVASLPEYTGSQAGAIVEPEQVEPPQEYTGNIEPAAPEAENPTEKAQEPKEQKQEPEKNIELRNVSDVELYSLADGKYKQHVSLDAIPSNQENYFVKVKSSKFKDVFLPISSIVDSTKDGQPVYKITASAEKLKQDVNNKYEDNFTFYLAKKAEREVTNFTSFSNLVQAINNNLNGTYYLAASLNANEVELENGASSYIKGRFTGKLFGSKDGKNYAIYNLKKPLFDTLSAATVENLTLKDVNISGKTDIGALANEANNATRINNVHVDGVLAGERGIGGLVWKADNSKISNSSFKGRIVNSYETKAPYNIGGLVGQLTGINALVDKSKATITISSNADSTNQTVGGLAGLVEKDALISNSYAEGNINNVKRFGSVAGVAGYLWDRDSSEERHAGRLHNVLSDINVMNGNAISGYHYRGMRITDSYSNKDNRVYKVTLEKDEVVTKESLEERGTILDVSQIASKKSEINSLSAPKVETLLTSTNKESDFSKVKDYQASRALAYKNIEKLLPFYNKATIVKYGNLVKEDSTLYEKEILSAVMMKDNEVITDIASHKEAANKLLIHYKDHSSEKLDLTYQSDFSKLAEYRVGDTGLIYTPNQFLQNHSSIVNEVLPDLKAVDYQSEAIRNTLGISSGVSLTELYLEEQFAKTKENLANTLEKLLSADAVIASENQTINGYVVDKIKRNKEALLLGLTYLERWYNFNYGDVNVKDLVMYHMDFFGKGNVSPLDTIIELGKSGFNNLLAKNNVDAYNISLANNNATKDLFSTLANYREVFLPNKTNNQWFKEQTKAYIVEEKSAIDEVRVKQEQAGSKYSIGVYDRITSDTWKYRNMVLPLLTMPERSVFVISTISSLGFGAYDRYRNNEHRAGAELNKFVEDNAQETAKRQRDHYDYWYRILDEQGREKLYRNILVYDAYKFGDDTTVDKATVEAQFDSSNPAMKYFFGPVGNKVVHNKHGAYATGDSVYYMGYRMLDKDGAITYTHEMTHDSDNEIYLGGYGRRSGLGPEFFAKGLLQAPDHPDDATITVNSILKYDKNDASEKSRLQVLDPTKRFQNADDLKNYVHNMFDVIYMLEYLEGMSIVNRLSDVQKVNALRKIENKYVRDADGNDVYATNVIKNITMADAQKLNSFNSLIENDILSAREYKNGDVERNGYHTIKLFSPIYSALSSEKGTPGDLMGRRIAYELLAAKGFKDGMVPYISNQYEDDAKQNGKTISIYGKTRGLVTDDLVLRKVFNGQFNNWTEFKKAMYEERKNKFDSLNKVTFDDTRQPWTSYATKTISTVEELQTLMDEAVLQDANDNWYSWSGYKPEYNSAVHKLKKAVFKAYLDQTKDFRKSIFENQK.

The N-terminal stretch at 1 to 37 (MKKFLGEKQTRFAFRKLAVGLVSAAISSLFFVSIVGV) is a signal peptide. Positions 38 to 99 (DSVQAQEKLN…NAGAKTLPNT (62 aa)) are excised as a propeptide. Positions 96-100 (LPNTG) match the LPXTG sorting signal motif. Position 99 is a pentaglycyl murein peptidoglycan amidated threonine (threonine 99). 2 helical membrane passes run 106-125 (TMMA…FAVS) and 132-154 (KFLL…VDAL). The Extracellular segment spans residues 155–1854 (ENGSLLQYNA…FRKSIFENQK (1700 aa)). The 80-residue stretch at 256–335 (KPELLYKETS…PKIVEKGTKK (80 aa)) folds into the G5 domain. Repeat copies occupy residues 349–368 (VQPE…SGAI), 369–388 (VEPE…SGAI), 389–406 (VEPE…SGAI), 407–426 (VEPE…AGAV), 427–446 (VSPE…SGAI), 447–466 (VEPA…SGAI), 467–486 (VKPA…SGAI), 487–506 (VEPE…AGAI), 507–526 (VEPE…AGAI), and 527–546 (VEPE…EPAA). The segment at 349-546 (VQPEQVAPLP…EYTGNIEPAA (198 aa)) is 10 X 20 AA approximate tandem repeats. Residues 533 to 550 (EPPQEYTGNIEPAAPEAE) are compositionally biased toward low complexity. Residues 533–570 (EPPQEYTGNIEPAAPEAENPTEKAQEPKEQKQEPEKNI) are disordered. Positions 552–570 (PTEKAQEPKEQKQEPEKNI) are enriched in basic and acidic residues. Residue histidine 1494 participates in Zn(2+) binding. Residue glutamate 1495 is part of the active site. The Zn(2+) site is built by histidine 1498 and glutamate 1518.

It belongs to the peptidase M26 family. Zn(2+) is required as a cofactor. Post-translationally, the Gram-positive cell-wall anchor motif LPXTG is located in the N-terminal part, in contrast to such motifs in other known streptococcal and staphylococcal proteins. The protease could be cleaved by the sortase and anchored in the membrane via the two potential N-terminal transmembrane domains, whereas the propeptide located prior to the LPXTG motif would remain attached to the cell wall peptidoglycan by an amide bond.

The protein resides in the secreted. The protein localises to the cell wall. It localises to the membrane. It catalyses the reaction Cleavage of Pro-|-Thr bond in the hinge region of the heavy chain of human IgA.. With respect to regulation, inhibited by EDTA. In terms of biological role, zinc metalloproteinase which cleaves human immunoglobulin A1 (IgA1) in the hinge region. This is Immunoglobulin A1 protease (iga) from Streptococcus sanguinis.